Here is a 1052-residue protein sequence, read N- to C-terminus: SWI/SNF-related matrix-associated actin-dependent regulator of chromatin subfamily A member 5 (1052 aa).

Residues 1–15 (MSSAAEPPPPPPPES) are compositionally biased toward pro residues. Positions 1–83 (MSSAAEPPPP…QEPDPTYEEK (83 aa)) are disordered. At Ser-2 the chain carries N-acetylserine. A compositionally biased stretch (low complexity) spans 16 to 55 (APSKPAASIASGGSNSSNKGGPEGVAAQAVASAASAGPAD). Ser-66 carries the post-translational modification Phosphoserine. Positions 69-83 (KQKEIQEPDPTYEEK) are enriched in basic and acidic residues. Residue Lys-83 forms a Glycyl lysine isopeptide (Lys-Gly) (interchain with G-Cter in SUMO2) linkage. Phosphothreonine is present on Thr-113. Residues Ser-116, Ser-137, and Ser-171 each carry the phosphoserine modification. In terms of domain architecture, Helicase ATP-binding spans 192–357 (ISLYENGING…WSLLNFLLPD (166 aa)). Residue 205–212 (DEMGLGKT) coordinates ATP. Residues 308–311 (DEAH) carry the DEAH box motif. The residue at position 440 (Lys-440) is an N6-acetyllysine. Residues 487–638 (VLDKLLPKLK…SIVIQQGRLV (152 aa)) enclose the Helicase C-terminal domain. Residues Lys-644, Lys-647, Lys-694, Lys-722, and Lys-735 each participate in a glycyl lysine isopeptide (Lys-Gly) (interchain with G-Cter in SUMO2) cross-link. 2 positions are modified to phosphoserine: Ser-755 and Ser-825. SANT domains follow at residues 840–892 (QGFT…ERCN) and 943–1007 (KGKN…LITL). Lys-966 participates in a covalent cross-link: Glycyl lysine isopeptide (Lys-Gly) (interchain with G-Cter in SUMO2). The disordered stretch occupies residues 1015–1052 (LEEKEKAEKKKRGPKPSTQKRKMDGAPDGRGRKKKLKL). The segment covering 1023 to 1034 (KKKRGPKPSTQK) has biased composition (basic residues). Residues 1035–1044 (RKMDGAPDGR) are compositionally biased toward basic and acidic residues.

This sequence belongs to the SNF2/RAD54 helicase family. ISWI subfamily. As to quaternary structure, component of the ACF-5 ISWI chromatin-remodeling complex (also called the ACF/WCRF complex) at least composed of SMARCA5/SNF2H and BAZ1A/ACF1, which regulates the spacing of histone octamers on the DNA template to facilitate access to DNA. Within the complex interacts with BAZ1A/ACF1; the interaction is direct and is required to slide nucleosomes from end to center positions on a DNA template in an ATP-dependent manner. Component of the CHRAC ISWI chromatin-remodeling complex at least composed of SMARCA5/SNF2H, BAZ1A/ACF1, CHRAC1 and POLE3; the complex preferentially binds DNA through the CHRAC1-POLE3 heterodimer and possesses ATP-dependent nucleosome-remodeling activity. Within the complex interacts with BAZ1A/ACF1; the interaction is direct and promotes the interaction with the POLE3-CHRAC1 heterodimer. Within the complex interacts with the POLE3-CHRAC1 heterodimer; the interaction is direct and enhances nucleosome sliding activity by the SMARCA5/SNF2H and BAZ1A/ACF1 interaction. Neither POLE3 nor CHRAC1 enhances nucleosome sliding activity of the ACF-5 ISWI chromatin remodeling complex. Component of the WICH-5 ISWI chromatin-remodeling complex (also called the WICH complex) at least composed of SMARCA5/SNF2H and BAZ1B/WSTF, which regulates the spacing of histone octamers on the DNA template to facilitate access to DNA. Within the complex interacts with BAZ1B/WSTF. Component of the NoRC-5 ISWI chromatin-remodeling complex (also called the NoRC chromatin-remodeling complex) at least composed of SMARCA5/SNF2H and BAZ2A/TIP5; the complex suppresses rDNA transcription by a combination of nucleosome remodeling, histone deacetylation, and DNA methylation. Within the complex interacts with BAZ2A/TIP5. Within the complex interacts with HDAC1. Component of the BRF-5 ISWI chromatin-remodeling complex at least composed of SMARCA5/SNF2H and BAZ2B. Within the complex interacts with BAZ2B. Component of the NURF-5 ISWI chromatin-remodeling complex at least composed of SMARCA5/SNF2H and BPTF. Within the complex interacts with BPFT. Component of the CERF-5 ISWI chromatin-remodeling complex at least composed of SMARCA5/SNF2H and CECR2. LUZP1 is detected as part of the CERF-5 complex in embryonic stem cells where it is involved in complex stabilization but is not detected in the complex in the testis. Within the complex interacts with CECR2. Component of the RSF-5 ISWI chromatin-remodeling complex (also called the RSF complex) at least composed of SMARCA5/SNF2H and RSF1. Within the complex interacts with RSF1. Interacts with the cohesin complex component RAD21; the interaction is direct. Interacts with the NuRD complex components HDAC2, RBBP4 and CHD4; the interactions are direct. Interacts with PCNA. Component of the B-WICH complex, at least composed of SMARCA5/SNF2H, BAZ1B/WSTF, SF3B1, DEK, MYO1C, ERCC6, MYBBP1A and DDX21 which positively regulates RNA polymerase III transcription. Interacts with MYO1C. Interacts with BEND3. Interacts with SIRT6; promoting recruitment to DNA damage sites. (Microbial infection) Interacts with JC virus small t antigen. In terms of assembly, (Microbial infection) Interacts with Epstein Barr virus (EBV) lytic switch protein BZLF1; this interaction participates to the activation of early lytic viral genes by BZLF1. In terms of tissue distribution, ubiquitously expressed.

Its subcellular location is the nucleus. It localises to the chromosome. The enzyme catalyses ATP + H2O = ADP + phosphate + H(+). ATPase that possesses intrinsic ATP-dependent nucleosome-remodeling activity. Catalytic subunit of ISWI chromatin-remodeling complexes, which form ordered nucleosome arrays on chromatin and facilitate access to DNA during DNA-templated processes such as DNA replication, transcription, and repair; this may require intact histone H4 tails. Within the ISWI chromatin-remodeling complexes, slides edge- and center-positioned histone octamers away from their original location on the DNA template. Catalytic activity and histone octamer sliding propensity is regulated and determined by components of the ISWI chromatin-remodeling complexes. The BAZ1A/ACF1-, BAZ1B/WSTF-, BAZ2A/TIP5- and BAZ2B-containing ISWI chromatin-remodeling complexes regulate the spacing of nucleosomes along the chromatin and have the ability to slide mononucleosomes to the center of a DNA template in an ATP-dependent manner. The CECR2- and RSF1-containing ISWI chromatin-remodeling complexes do not have the ability to slide mononucleosomes to the center of a DNA template. Binds to core histones together with RSF1, and is required for the assembly of regular nucleosome arrays by the RSF-5 ISWI chromatin-remodeling complex. Involved in DNA replication and together with BAZ1A/ACF1 is required for replication of pericentric heterochromatin in S-phase. Probably plays a role in repression of RNA polymerase I dependent transcription of the rDNA locus, through the recruitment of the SIN3/HDAC1 corepressor complex to the rDNA promoter. Essential component of the WICH-5 ISWI chromatin-remodeling complex (also called the WICH complex), a chromatin-remodeling complex that mobilizes nucleosomes and reconfigures irregular chromatin to a regular nucleosomal array structure. The WICH-5 ISWI chromatin-remodeling complex regulates the transcription of various genes, has a role in RNA polymerase I transcription. Within the B-WICH complex has a role in RNA polymerase III transcription. Mediates the histone H2AX phosphorylation at 'Tyr-142', and is involved in the maintenance of chromatin structures during DNA replication processes. Essential component of NoRC-5 ISWI chromatin-remodeling complex, a complex that mediates silencing of a fraction of rDNA by recruiting histone-modifying enzymes and DNA methyltransferases, leading to heterochromatin formation and transcriptional silencing. The protein is SWI/SNF-related matrix-associated actin-dependent regulator of chromatin subfamily A member 5 of Homo sapiens (Human).